Reading from the N-terminus, the 149-residue chain is Arginine repressor (149 aa).

Belongs to the ArgR family.

The protein localises to the cytoplasm. Its pathway is amino-acid biosynthesis; L-arginine biosynthesis [regulation]. Its function is as follows. Regulates arginine biosynthesis genes. The protein is Arginine repressor of Bacillus pumilus (strain SAFR-032).